The following is a 234-amino-acid chain: Small ribosomal subunit protein uS2c (234 aa).

Belongs to the universal ribosomal protein uS2 family.

The protein localises to the plastid. It is found in the chloroplast. The chain is Small ribosomal subunit protein uS2c (rps2) from Pinus thunbergii (Japanese black pine).